The sequence spans 198 residues: tRNA (pseudouridine(54)-N(1))-methyltransferase (198 aa).

An S-adenosyl-L-methionine-binding site is contributed by leucine 128.

This sequence belongs to the methyltransferase superfamily. TrmY family. In terms of assembly, homodimer.

It localises to the cytoplasm. It carries out the reaction pseudouridine(54) in tRNA + S-adenosyl-L-methionine = N(1)-methylpseudouridine(54) in tRNA + S-adenosyl-L-homocysteine + H(+). In terms of biological role, specifically catalyzes the N1-methylation of pseudouridine at position 54 (Psi54) in tRNAs. This chain is tRNA (pseudouridine(54)-N(1))-methyltransferase, found in Haloarcula marismortui (strain ATCC 43049 / DSM 3752 / JCM 8966 / VKM B-1809) (Halobacterium marismortui).